Reading from the N-terminus, the 614-residue chain is Chaperone protein DnaK (614 aa).

Residue threonine 173 is modified to Phosphothreonine; by autocatalysis. Basic and acidic residues-rich tracts occupy residues 490-509 (EENA…RNEA) and 529-542 (EEDK…KEAL). 3 disordered regions span residues 490-510 (EENA…NEAD), 524-555 (GENI…DDIK), and 575-614 (QAAQ…DNQK). Residues 575 to 584 (QAAQAQQQAQ) show a composition bias toward low complexity. Residues 599–614 (ADFKEVKDDDNQDNQK) show a composition bias toward basic and acidic residues.

This sequence belongs to the heat shock protein 70 family.

Its function is as follows. Acts as a chaperone. In Staphylococcus saprophyticus subsp. saprophyticus (strain ATCC 15305 / DSM 20229 / NCIMB 8711 / NCTC 7292 / S-41), this protein is Chaperone protein DnaK.